The sequence spans 146 residues: uncharacterized protein (146 aa).

The 137-residue stretch at 1-137 (MLSQEFFNSF…TINVMNQIHK (137 aa)) folds into the HTH marR-type domain.

This is an uncharacterized protein from Staphylococcus aureus (strain MW2).